The chain runs to 203 residues: Small ribosomal subunit protein uS4 (203 aa).

A disordered region spans residues 15-46 (LGENIWGRPKSSVNRRSYGPGQHGQRRKSKVS). Residues 94 to 154 (QRLDMVVYRA…KKAKEMALIA (61 aa)) enclose the S4 RNA-binding domain.

It belongs to the universal ribosomal protein uS4 family. In terms of assembly, part of the 30S ribosomal subunit. Contacts protein S5. The interaction surface between S4 and S5 is involved in control of translational fidelity.

Its function is as follows. One of the primary rRNA binding proteins, it binds directly to 16S rRNA where it nucleates assembly of the body of the 30S subunit. With S5 and S12 plays an important role in translational accuracy. In Novosphingobium aromaticivorans (strain ATCC 700278 / DSM 12444 / CCUG 56034 / CIP 105152 / NBRC 16084 / F199), this protein is Small ribosomal subunit protein uS4.